Here is a 332-residue protein sequence, read N- to C-terminus: Putative threonine dehydratase (332 aa).

N6-(pyridoxal phosphate)lysine is present on Lys56.

It belongs to the serine/threonine dehydratase family. Pyridoxal 5'-phosphate is required as a cofactor.

It catalyses the reaction L-threonine = 2-oxobutanoate + NH4(+). It participates in amino-acid biosynthesis; L-isoleucine biosynthesis; 2-oxobutanoate from L-threonine: step 1/1. This chain is Putative threonine dehydratase, found in Sinorhizobium fredii (strain NBRC 101917 / NGR234).